A 345-amino-acid chain; its full sequence is Methylthioribose-1-phosphate isomerase (345 aa).

Substrate-binding positions include 44–46 (RGA), Arg86, and Gln194. Asp235 (proton donor) is an active-site residue. 245–246 (NK) contacts substrate.

Belongs to the eIF-2B alpha/beta/delta subunits family. MtnA subfamily.

The catalysed reaction is 5-(methylsulfanyl)-alpha-D-ribose 1-phosphate = 5-(methylsulfanyl)-D-ribulose 1-phosphate. The protein operates within amino-acid biosynthesis; L-methionine biosynthesis via salvage pathway; L-methionine from S-methyl-5-thio-alpha-D-ribose 1-phosphate: step 1/6. Its function is as follows. Catalyzes the interconversion of methylthioribose-1-phosphate (MTR-1-P) into methylthioribulose-1-phosphate (MTRu-1-P). The protein is Methylthioribose-1-phosphate isomerase of Desulfitobacterium hafniense (strain DSM 10664 / DCB-2).